We begin with the raw amino-acid sequence, 925 residues long: Serine/threonine-protein kinase PLK4 (925 aa).

Positions Phe-12–Met-265 constitute a Protein kinase domain. ATP contacts are provided by residues Leu-18–Val-26 and Lys-41. Lys-45 and Lys-46 each carry N6-acetyllysine. Asp-136 functions as the Proton acceptor in the catalytic mechanism. 2 disordered regions span residues His-262–Met-283 and Lys-328–Ser-394. Residues Ser-330–Phe-341 show a composition bias toward low complexity. The segment covering Cys-342–Asn-353 has biased composition (polar residues). Over residues Arg-359 to His-369 the composition is skewed to basic and acidic residues. Residues Arg-381–Lys-391 show a composition bias toward polar residues. Ser-400 carries the phosphoserine modification. The interval Glu-517–Glu-538 is disordered. Positions Leu-525–Ser-536 are enriched in basic and acidic residues. The region spanning Thr-547 to Lys-660 is the Cryptic POLO box 1 (CPB1) domain. Positions Thr-661–Pro-774 constitute a Cryptic POLO box 2 (CPB2) domain. At Ser-778 the chain carries Phosphoserine. Residues Gln-841–Asn-919 form the POLO box domain.

The protein belongs to the protein kinase superfamily. Ser/Thr protein kinase family. CDC5/Polo subfamily. Homodimer. Interacts with CEP152 (via N-terminus). Interacts with CEP78; this interaction may be important for proper PLK4 localization to the centriole and PLK4-induced overduplication of centrioles. Interacts with CEP131. Interacts simultaneously with TENT5C and CEP192. Interacts with TENT5C; this interaction leads to the TENT5C recruitment in the centrosome. Interacts with CEP85; this interaction may be important in cell migration and centriole assembly. Post-translationally, ubiquitinated; leading to its degradation by the proteasome. Deubiquitinated by USP54; leading to PLK4 stabilization. Tyrosine-phosphorylated by TEC. In terms of processing, acetylation by KAT2A and KAT2B impairs kinase activity by shifting the kinase to an inactive conformation. As to expression, expressed in tissues associated with mitotic and meiotic cell division. Highly expressed in testis.

It localises to the cytoplasm. The protein localises to the cytoskeleton. The protein resides in the microtubule organizing center. It is found in the centrosome. Its subcellular location is the centriole. It localises to the nucleus. The protein localises to the nucleolus. The protein resides in the cleavage furrow. It catalyses the reaction L-seryl-[protein] + ATP = O-phospho-L-seryl-[protein] + ADP + H(+). It carries out the reaction L-threonyl-[protein] + ATP = O-phospho-L-threonyl-[protein] + ADP + H(+). Functionally, serine/threonine-protein kinase that plays a central role in centriole duplication. Able to trigger procentriole formation on the surface of the parental centriole cylinder, leading to the recruitment of centriole biogenesis proteins such as SASS6, CPAP, CCP110, CEP135 and gamma-tubulin. When overexpressed, it is able to induce centrosome amplification through the simultaneous generation of multiple procentrioles adjoining each parental centriole during S phase. Phosphorylates 'Ser-151' of FBXW5 during the G1/S transition, leading to inhibit FBXW5 ability to ubiquitinate SASS6. Its central role in centriole replication suggests a possible role in tumorigenesis, centrosome aberrations being frequently observed in tumors. Phosphorylates CDC25C and CHEK2. Also involved in deuterosome-mediated centriole amplification in multiciliated that can generate more than 100 centrioles. Also involved in trophoblast differentiation by phosphorylating HAND1, leading to disrupt the interaction between HAND1 and MDFIC and activate HAND1. Required for the recruitment of STIL to the centriole and for STIL-mediated centriole amplification. Phosphorylates CEP131 at 'Ser-78' and PCM1 at 'Ser-372' which is essential for proper organization and integrity of centriolar satellites. The protein is Serine/threonine-protein kinase PLK4 of Mus musculus (Mouse).